Here is a 102-residue protein sequence, read N- to C-terminus: Aspartyl/glutamyl-tRNA(Asn/Gln) amidotransferase subunit C (102 aa).

This sequence belongs to the GatC family. In terms of assembly, heterotrimer of A, B and C subunits.

It catalyses the reaction L-glutamyl-tRNA(Gln) + L-glutamine + ATP + H2O = L-glutaminyl-tRNA(Gln) + L-glutamate + ADP + phosphate + H(+). The catalysed reaction is L-aspartyl-tRNA(Asn) + L-glutamine + ATP + H2O = L-asparaginyl-tRNA(Asn) + L-glutamate + ADP + phosphate + 2 H(+). Allows the formation of correctly charged Asn-tRNA(Asn) or Gln-tRNA(Gln) through the transamidation of misacylated Asp-tRNA(Asn) or Glu-tRNA(Gln) in organisms which lack either or both of asparaginyl-tRNA or glutaminyl-tRNA synthetases. The reaction takes place in the presence of glutamine and ATP through an activated phospho-Asp-tRNA(Asn) or phospho-Glu-tRNA(Gln). This is Aspartyl/glutamyl-tRNA(Asn/Gln) amidotransferase subunit C from Mycobacteroides abscessus (strain ATCC 19977 / DSM 44196 / CCUG 20993 / CIP 104536 / JCM 13569 / NCTC 13031 / TMC 1543 / L948) (Mycobacterium abscessus).